The sequence spans 476 residues: tRNA(Ile)-lysidine synthase (476 aa).

Residue 30-35 participates in ATP binding; sequence SGGPDS.

It belongs to the tRNA(Ile)-lysidine synthase family.

It is found in the cytoplasm. It carries out the reaction cytidine(34) in tRNA(Ile2) + L-lysine + ATP = lysidine(34) in tRNA(Ile2) + AMP + diphosphate + H(+). In terms of biological role, ligates lysine onto the cytidine present at position 34 of the AUA codon-specific tRNA(Ile) that contains the anticodon CAU, in an ATP-dependent manner. Cytidine is converted to lysidine, thus changing the amino acid specificity of the tRNA from methionine to isoleucine. The sequence is that of tRNA(Ile)-lysidine synthase from Bacillus anthracis.